The sequence spans 260 residues: CD27 antigen (260 aa).

A signal peptide spans 1 to 19; that stretch reads MARPHPWWLCVLGTLVGLS. At 20 to 191 the chain is on the extracellular side; sequence ATPAPKSCPE…RSLCSSDFIR (172 aa). 3 TNFR-Cys repeats span residues 26 to 63, 64 to 104, and 105 to 141; these read SCPE…AQCD, PCIP…NAEC, and ACRN…PHPQ. Cystine bridges form between C27–C39, C40–C53, C43–C62, C65–C81, C84–C96, C87–C104, C106–C120, and C112–C117. N95 carries N-linked (GlcNAc...) asparagine glycosylation. O-linked (GalNAc...) serine glycosylation occurs at S127. Residues 192-212 traverse the membrane as a helical segment; that stretch reads ILVIFSGMFLVFTLAGALFLH. The Cytoplasmic portion of the chain corresponds to 213 to 260; it reads QRRKYRSNKGESPVEPAEPCHYSCPREEEGSTIPIQEDYRKPEPACSP. S219 is modified (phosphoserine). Residues 219–260 are disordered; sequence SNKGESPVEPAEPCHYSCPREEEGSTIPIQEDYRKPEPACSP. The span at 249–260 shows a compositional bias: basic and acidic residues; that stretch reads EDYRKPEPACSP.

In terms of assembly, homodimer. Interacts with SIVA1; may play a role in apoptosis through association with SIVA1. Interacts with TRAF2. Interacts ith PTPN6. Phosphorylated. Post-translationally, N-glycosylated. In terms of processing, O-glycosylated with core 1 or possibly core 8 glycans. As to expression, found in most T-lymphocytes.

It localises to the cell membrane. Costimulatory immune-checkpoint receptor expressed at the surface of T-cells, NK-cells and B-cells which binds to and is activated by its ligand CD70/CD27L expressed by B-cells. The CD70-CD27 signaling pathway mediates antigen-specific T-cell activation and expansion which in turn provides immune surveillance of B-cells. Mechanistically, CD70 ligation activates the TRAF2-PTPN6 axis that subsequently inhibits LCK phosphorylation to promote phenotypic and transcriptional adaptations of T-cell memory. In addition, activation by CD70 on early progenitor cells provides a negative feedback signal to leukocyte differentiation during immune activation and thus modulates hematopoiesis. Negatively regulates the function of Th2 lymphocytes in the adipose tissue. The chain is CD27 antigen from Homo sapiens (Human).